The chain runs to 227 residues: Ribosomal RNA large subunit methyltransferase E (227 aa).

Positions 78, 80, 103, 119, and 143 each coordinate S-adenosyl-L-methionine. The active-site Proton acceptor is the Lys183.

Belongs to the class I-like SAM-binding methyltransferase superfamily. RNA methyltransferase RlmE family.

The protein resides in the cytoplasm. The enzyme catalyses uridine(2552) in 23S rRNA + S-adenosyl-L-methionine = 2'-O-methyluridine(2552) in 23S rRNA + S-adenosyl-L-homocysteine + H(+). In terms of biological role, specifically methylates the uridine in position 2552 of 23S rRNA at the 2'-O position of the ribose in the fully assembled 50S ribosomal subunit. The sequence is that of Ribosomal RNA large subunit methyltransferase E from Rickettsia peacockii (strain Rustic).